We begin with the raw amino-acid sequence, 64 residues long: Alpha-mammal toxin Lqh2 (64 aa).

The region spanning 2 to 64 (KDGYIVDDVN…VRTKGPGRCR (63 aa)) is the LCN-type CS-alpha/beta domain. Disulfide bonds link cysteine 12/cysteine 63, cysteine 16/cysteine 36, cysteine 22/cysteine 46, and cysteine 26/cysteine 48. An Arginine amide modification is found at arginine 64.

The protein belongs to the long (4 C-C) scorpion toxin superfamily. Sodium channel inhibitor family. Alpha subfamily. As to expression, expressed by the venom gland.

The protein localises to the secreted. In terms of biological role, alpha toxins bind voltage-independently at site-3 of sodium channels (Nav) and inhibit the inactivation of the activated channels, thereby blocking neuronal transmission. The dissociation is voltage-dependent. Is active on mammals and competes for alpha-toxins binding on both mammalian and cockroach sodium channels. In Leiurus hebraeus (Hebrew deathstalker scorpion), this protein is Alpha-mammal toxin Lqh2.